Here is a 257-residue protein sequence, read N- to C-terminus: MRHTMELTMVGTGSAFSKKFYNNSALVEFSNGYRLLIDCGHSVPKGLHALGFPLDSLDGILITHTHADHIGGLEEVALYNKFVLGGRKIDLLVPNTLVESLWENSLKGGLRYPDEGSPEPELSDYFTVRSLKTSSYGVAHTQIEENMAVRLYPTVHVSHMDSYAVGLVDRGEDKVFYSSDTIFDEYLIDYALTYSWVFHDCQFFTGGVHASLDELLSYISEEDQSRVFLMHYGDNMEDFFTKAGMMRFALQGRTYIL.

The beta-lactamase-like stretch occupies residues 21-231 (YNNSALVEFS…EDQSRVFLMH (211 aa)). 7 residues coordinate Zn(2+): His-64, His-66, Asp-68, His-69, His-156, Asp-180, and His-231.

It belongs to the anti-Pycsar protein Apyc1 family. In terms of assembly, homodimer. Zn(2+) is required as a cofactor.

It catalyses the reaction 3',5'-cyclic CMP + H2O = CMP + H(+). It carries out the reaction 3',5'-cyclic UMP + H2O = UMP + H(+). Functionally, counteracts the host Pycsar antiviral defense system. Phosphodiesterase that enables metal-dependent hydrolysis of host cyclic nucleotide Pycsar defense signals such as cCMP and cUMP. This chain is Anti-Pycsar protein Apyc1, found in Bacillus phage 010DV004.